The sequence spans 162 residues: MRNWELSVSPSFLELCDQYVSLCESPSFSGPSCLNDMAPDDILGNCDLFAEAADALFPDCLLEEVEAASGLAFETNEEVEGFVFPDCPERPGQECRSCKQHREMSGDPSILCSLCYMRLTACFVYSPVSDVEDEEPTEGVAENSLKRQADSSLCSSSPKRFC.

The segment at 134–162 is disordered; that stretch reads EEPTEGVAENSLKRQADSSLCSSSPKRFC. Positions 150 to 162 are enriched in polar residues; it reads DSSLCSSSPKRFC.

The chain is Early E1A 18 kDa protein from Tree shrew adenovirus serotype 1 (TSAdV-1).